We begin with the raw amino-acid sequence, 199 residues long: Probable GTP-binding protein EngB (199 aa).

The 174-residue stretch at 24–197 (EGYEVIFAGR…GARLNTFFGY (174 aa)) folds into the EngB-type G domain. GTP-binding positions include 32–39 (GRSNAGKS), 59–63 (GKTQH), 77–80 (DLPG), 144–147 (TKSD), and 176–178 (FSS). Mg(2+) contacts are provided by Ser-39 and Thr-61.

The protein belongs to the TRAFAC class TrmE-Era-EngA-EngB-Septin-like GTPase superfamily. EngB GTPase family. The cofactor is Mg(2+).

Functionally, necessary for normal cell division and for the maintenance of normal septation. The chain is Probable GTP-binding protein EngB from Ruthia magnifica subsp. Calyptogena magnifica.